The following is an 84-amino-acid chain: Cytochrome b559 subunit alpha (84 aa).

The chain crosses the membrane as a helical span at residues V22 to W36. H24 is a heme binding site.

The protein belongs to the PsbE/PsbF family. In terms of assembly, heterodimer of an alpha subunit and a beta subunit. PSII is composed of 1 copy each of membrane proteins PsbA, PsbB, PsbC, PsbD, PsbE, PsbF, PsbH, PsbI, PsbJ, PsbK, PsbL, PsbM, PsbT, PsbX, PsbY, PsbZ, Psb30/Ycf12, at least 3 peripheral proteins of the oxygen-evolving complex and a large number of cofactors. It forms dimeric complexes. Requires heme b as cofactor.

The protein localises to the plastid. It localises to the chloroplast thylakoid membrane. Functionally, this b-type cytochrome is tightly associated with the reaction center of photosystem II (PSII). PSII is a light-driven water:plastoquinone oxidoreductase that uses light energy to abstract electrons from H(2)O, generating O(2) and a proton gradient subsequently used for ATP formation. It consists of a core antenna complex that captures photons, and an electron transfer chain that converts photonic excitation into a charge separation. The polypeptide is Cytochrome b559 subunit alpha (Porphyra purpurea (Red seaweed)).